The primary structure comprises 433 residues: MRGPEPGPQPTMEGDVLDTLEALGYKGPLLEEQALTKAAEGGLSSPEFSELCIWLGSQIKSLCNLEESITSAGRDDLESFQLEISGFLKEMACPYSVLISGDIKDRLKKKEDCLKLLLFLSTELQASQILQNKKHKNSQLDKNSEVYQEVQAMFDTLGIPKSTTSDIPHMLNQVESKVKDILSKVQKNHVGKPLLKMDLNSEQAEQLERINDALSCEYECRRRMLMKRLDVTVQSFGWSDRAKVKTDDIARIYQPKRYALSPKTTITMAHLLAAREDLSKIIRTSSGTSREKTACAINKVLMGRVPDRGGRPNEIEPPPPEMPPWQKRQEGGGGRGGWGGGGGGGGRGGGGGGGGRGGWGGGGGGWGGGGGGGGGWGGGGGGGRGGFQGRGDYGGRGGYGGRGGYGGRGYGDPYGGGGGGGGGGGGGGGYRRY.

The tract at residues 303-433 is disordered; the sequence is GRVPDRGGRP…GGGGGGYRRY (131 aa). The span at 305 to 314 shows a compositional bias: basic and acidic residues; the sequence is VPDRGGRPNE. The span at 331 to 433 shows a compositional bias: gly residues; the sequence is GGGGRGGWGG…GGGGGGYRRY (103 aa).

Belongs to the FAM98 family. As to quaternary structure, homodimer. Component of the tRNA-splicing ligase complex. Interacts with FAM98A. Expressed strongly in colorectal cancer tissues compared to wild-type colon samples (at protein level). Expressed strongly in colorectal cancer tissues compared to wild-type colon samples.

The protein resides in the nucleus. It is found in the cytoplasm. Its function is as follows. Positively stimulates PRMT1-induced protein arginine dimethylated arginine methylation. This is Protein FAM98B (FAM98B) from Homo sapiens (Human).